Consider the following 230-residue polypeptide: NAD(P)H-hydrate epimerase (230 aa).

In terms of domain architecture, YjeF N-terminal spans 11–218 (AIAVDQELFN…ALQRKYELNL (208 aa)). 61 to 65 (NNGGD) is a (6S)-NADPHX binding site. The K(+) site is built by Asn62 and Asp126. Residues 130-136 (GFSFKPP) and Asp159 contribute to the (6S)-NADPHX site. Ser162 serves as a coordination point for K(+).

Belongs to the NnrE/AIBP family. K(+) serves as cofactor.

It carries out the reaction (6R)-NADHX = (6S)-NADHX. It catalyses the reaction (6R)-NADPHX = (6S)-NADPHX. In terms of biological role, catalyzes the epimerization of the S- and R-forms of NAD(P)HX, a damaged form of NAD(P)H that is a result of enzymatic or heat-dependent hydration. This is a prerequisite for the S-specific NAD(P)H-hydrate dehydratase to allow the repair of both epimers of NAD(P)HX. In Drosophila sechellia (Fruit fly), this protein is NAD(P)H-hydrate epimerase.